Consider the following 375-residue polypeptide: Erythronate-4-phosphate dehydrogenase (375 aa).

2 residues coordinate substrate: serine 45 and threonine 67. Aspartate 147 contacts NAD(+). Residue arginine 209 is part of the active site. Aspartate 233 provides a ligand contact to NAD(+). Glutamate 238 is a catalytic residue. Histidine 255 (proton donor) is an active-site residue. Glycine 258 provides a ligand contact to NAD(+). Residue tyrosine 259 coordinates substrate.

The protein belongs to the D-isomer specific 2-hydroxyacid dehydrogenase family. PdxB subfamily. Homodimer.

The protein localises to the cytoplasm. The enzyme catalyses 4-phospho-D-erythronate + NAD(+) = (R)-3-hydroxy-2-oxo-4-phosphooxybutanoate + NADH + H(+). The protein operates within cofactor biosynthesis; pyridoxine 5'-phosphate biosynthesis; pyridoxine 5'-phosphate from D-erythrose 4-phosphate: step 2/5. In terms of biological role, catalyzes the oxidation of erythronate-4-phosphate to 3-hydroxy-2-oxo-4-phosphonooxybutanoate. The chain is Erythronate-4-phosphate dehydrogenase from Shewanella amazonensis (strain ATCC BAA-1098 / SB2B).